The sequence spans 1224 residues: ATP-dependent helicase/deoxyribonuclease subunit B (1224 aa).

The region spanning 1 to 326 (MSLRFILGRA…VCAAANRRSE (326 aa)) is the UvrD-like helicase ATP-binding domain. 8 to 15 (GRAGTGKS) is an ATP binding site. The UvrD-like helicase C-terminal domain occupies 283 to 584 (QSAPRFQHPE…KLSLIPPELD (302 aa)). Residues Cys841, Cys1176, Cys1179, and Cys1185 each coordinate [4Fe-4S] cluster.

The protein belongs to the helicase family. AddB/RexB type 1 subfamily. Heterodimer of AddA and AddB. It depends on Mg(2+) as a cofactor. Requires [4Fe-4S] cluster as cofactor.

The heterodimer acts as both an ATP-dependent DNA helicase and an ATP-dependent, dual-direction single-stranded exonuclease. Recognizes the chi site generating a DNA molecule suitable for the initiation of homologous recombination. The AddB subunit has 5' -&gt; 3' nuclease activity but not helicase activity. In Heliobacterium modesticaldum (strain ATCC 51547 / Ice1), this protein is ATP-dependent helicase/deoxyribonuclease subunit B.